The chain runs to 589 residues: Probable translation initiation factor IF-2 (589 aa).

Residues 4-225 (VRSPFVVVMG…AGVSQRFIPR (222 aa)) form the tr-type G domain. Positions 13 to 20 (GHVDVGKT) are G1. 13–20 (GHVDVGKT) lines the GTP pocket. Positions 38-42 (MITQH) are G2. The interval 79-82 (DTPG) is G3. Residues 79 to 83 (DTPGH) and 133 to 136 (NKLD) each bind GTP. The G4 stretch occupies residues 133 to 136 (NKLD). The tract at residues 201–203 (SAV) is G5.

This sequence belongs to the TRAFAC class translation factor GTPase superfamily. Classic translation factor GTPase family. IF-2 subfamily.

Its function is as follows. Function in general translation initiation by promoting the binding of the formylmethionine-tRNA to ribosomes. Seems to function along with eIF-2. The protein is Probable translation initiation factor IF-2 of Pyrobaculum aerophilum (strain ATCC 51768 / DSM 7523 / JCM 9630 / CIP 104966 / NBRC 100827 / IM2).